An 87-amino-acid polypeptide reads, in one-letter code: Potassium channel toxin Ttr-beta-KTx (87 aa).

The signal sequence occupies residues Met-1–Cys-19. Positions Gly-20 to Gln-27 are excised as a propeptide. The region spanning Gln-53 to Asp-87 is the BetaSPN-type CS-alpha/beta domain. 3 disulfide bridges follow: Cys-56–Cys-77, Cys-63–Cys-82, and Cys-67–Cys-84.

Belongs to the long chain scorpion toxin family. Class 1 subfamily. In terms of tissue distribution, expressed by the venom gland.

It localises to the secreted. In terms of biological role, inhibits voltage-gated potassium channel. In Tityus trivittatus (Argentinean scorpion), this protein is Potassium channel toxin Ttr-beta-KTx.